The sequence spans 218 residues: uncharacterized protein (218 aa).

This is an uncharacterized protein from Mycoplasma pneumoniae (strain ATCC 29342 / M129 / Subtype 1) (Mycoplasmoides pneumoniae).